The chain runs to 536 residues: Zinc finger CCCH domain-containing protein 18 (536 aa).

The C3H1-type zinc-finger motif lies at 156-183 (EFPVKICHYFNKGFCKHGNNCRYFHGQI). One can recognise an HTH OST-type domain in the interval 211–294 (SLEKLEGEII…HGQHSVILAE (84 aa)). The region spanning 317 to 392 (RQIYLTFPAE…ARVLVKPYRE (76 aa)) is the RRM domain.

In terms of biological role, possesses ribonuclease activity in vitro. This chain is Zinc finger CCCH domain-containing protein 18, found in Arabidopsis thaliana (Mouse-ear cress).